Here is a 547-residue protein sequence, read N- to C-terminus: Fimbria adhesin EcpD (547 aa).

A signal peptide spans 1–20; that stretch reads MRVNLLIAMIIFALIWPATA.

Belongs to the EcpD/MatE family. As to quaternary structure, forms polymers. Interacts with EcpA.

It localises to the fimbrium. In terms of biological role, part of the ecpRABCDE operon, which encodes the E.coli common pilus (ECP). ECP is found in both commensal and pathogenic strains and plays a dual role in early-stage biofilm development and host cell recognition. Tip pilus adhesin, which is required for assembly of EcpA into fibers. The chain is Fimbria adhesin EcpD (ecpD) from Escherichia coli O18:K1:H7 (strain IHE3034 / ExPEC).